We begin with the raw amino-acid sequence, 234 residues long: Segregation and condensation protein A (234 aa).

The protein belongs to the ScpA family. In terms of assembly, component of a cohesin-like complex composed of ScpA, ScpB and the Smc homodimer, in which ScpA and ScpB bind to the head domain of Smc. The presence of the three proteins is required for the association of the complex with DNA.

It localises to the cytoplasm. Its function is as follows. Participates in chromosomal partition during cell division. May act via the formation of a condensin-like complex containing Smc and ScpB that pull DNA away from mid-cell into both cell halves. In Streptococcus pyogenes serotype M18 (strain MGAS8232), this protein is Segregation and condensation protein A.